The primary structure comprises 155 residues: Ribosomal RNA large subunit methyltransferase H (155 aa).

S-adenosyl-L-methionine contacts are provided by residues Gly104 and 123 to 128 (LGPMTF).

It belongs to the RNA methyltransferase RlmH family. Homodimer.

The protein resides in the cytoplasm. The enzyme catalyses pseudouridine(1915) in 23S rRNA + S-adenosyl-L-methionine = N(3)-methylpseudouridine(1915) in 23S rRNA + S-adenosyl-L-homocysteine + H(+). In terms of biological role, specifically methylates the pseudouridine at position 1915 (m3Psi1915) in 23S rRNA. The polypeptide is Ribosomal RNA large subunit methyltransferase H (Nitratidesulfovibrio vulgaris (strain DSM 19637 / Miyazaki F) (Desulfovibrio vulgaris)).